Here is a 273-residue protein sequence, read N- to C-terminus: 1,4-dihydroxy-2-naphthoyl-CoA synthase (273 aa).

Substrate-binding positions include arginine 34, 73–77 (SGGDQ), tyrosine 85, 117–121 (YAVGG), threonine 143, serine 149, tyrosine 246, and lysine 261. 142–144 (QTG) lines the hydrogencarbonate pocket. The segment covering 254–265 (GRDAFKEKRDPD) has biased composition (basic and acidic residues). A disordered region spans residues 254–273 (GRDAFKEKRDPDFDQFPKFP).

This sequence belongs to the enoyl-CoA hydratase/isomerase family. MenB subfamily. Hydrogencarbonate serves as cofactor.

The catalysed reaction is 2-succinylbenzoyl-CoA + H(+) = 1,4-dihydroxy-2-naphthoyl-CoA + H2O. It functions in the pathway quinol/quinone metabolism; 1,4-dihydroxy-2-naphthoate biosynthesis; 1,4-dihydroxy-2-naphthoate from chorismate: step 6/7. The protein operates within quinol/quinone metabolism; menaquinone biosynthesis. Converts o-succinylbenzoyl-CoA (OSB-CoA) to 1,4-dihydroxy-2-naphthoyl-CoA (DHNA-CoA). The polypeptide is 1,4-dihydroxy-2-naphthoyl-CoA synthase (Staphylococcus aureus (strain MRSA252)).